A 274-amino-acid polypeptide reads, in one-letter code: Bis(5'-nucleosyl)-tetraphosphatase, symmetrical (274 aa).

This sequence belongs to the Ap4A hydrolase family.

It carries out the reaction P(1),P(4)-bis(5'-adenosyl) tetraphosphate + H2O = 2 ADP + 2 H(+). In terms of biological role, hydrolyzes diadenosine 5',5'''-P1,P4-tetraphosphate to yield ADP. The chain is Bis(5'-nucleosyl)-tetraphosphatase, symmetrical from Shewanella sp. (strain MR-7).